Here is a 315-residue protein sequence, read N- to C-terminus: tRNA-cytidine(32) 2-sulfurtransferase (315 aa).

A PP-loop motif motif is present at residues 54-59; it reads SGGKDS. Positions 129, 132, and 220 each coordinate [4Fe-4S] cluster.

The protein belongs to the TtcA family. In terms of assembly, homodimer. Requires Mg(2+) as cofactor. [4Fe-4S] cluster serves as cofactor.

The protein localises to the cytoplasm. It carries out the reaction cytidine(32) in tRNA + S-sulfanyl-L-cysteinyl-[cysteine desulfurase] + AH2 + ATP = 2-thiocytidine(32) in tRNA + L-cysteinyl-[cysteine desulfurase] + A + AMP + diphosphate + H(+). Its pathway is tRNA modification. Its function is as follows. Catalyzes the ATP-dependent 2-thiolation of cytidine in position 32 of tRNA, to form 2-thiocytidine (s(2)C32). The sulfur atoms are provided by the cysteine/cysteine desulfurase (IscS) system. The polypeptide is tRNA-cytidine(32) 2-sulfurtransferase (Bordetella avium (strain 197N)).